A 376-amino-acid chain; its full sequence is Heat-inducible transcription repressor HrcA (376 aa).

Belongs to the HrcA family.

Functionally, negative regulator of class I heat shock genes (grpE-dnaK-dnaJ and groELS operons). Prevents heat-shock induction of these operons. This chain is Heat-inducible transcription repressor HrcA, found in Nostoc punctiforme (strain ATCC 29133 / PCC 73102).